We begin with the raw amino-acid sequence, 33 residues long: MIDYVGSFLGAYFLGFALFYGIGFFKSISNRII.

Residues 5–25 (VGSFLGAYFLGFALFYGIGFF) form a helical membrane-spanning segment.

Belongs to the inovirus G9P protein family.

It localises to the virion. The protein localises to the host membrane. May initiate with G7P the virion concomitant assembly-budding process, by interacting with the packaging signal of the viral genome. The assembly-budding takes place at the host inner membrane. In turn, G7P and G9P are present at the end of the filamentous virion that emerges first from the bacterial host. The chain is Tail virion protein G9P (IX) from Salmonella phage IKe (Bacteriophage IKe).